A 119-amino-acid chain; its full sequence is Putative arsenical resistance operon repressor ArsR2 (119 aa).

In terms of domain architecture, HTH arsR-type spans 24–119 (VDSDAMATDL…TLDDLRGNHE (96 aa)). A DNA-binding region (H-T-H motif) is located at residues 60-83 (VCDLEATVGVSQSAVSQALSRLYT).

Functionally, transcriptional repressor for the arsR2M operon. This is Putative arsenical resistance operon repressor ArsR2 (arsR2) from Halobacterium salinarum (strain ATCC 700922 / JCM 11081 / NRC-1) (Halobacterium halobium).